Here is a 634-residue protein sequence, read N- to C-terminus: Chaperone protein HtpG (634 aa).

The a; substrate-binding stretch occupies residues 1–342; it reads MTVDTDKQTL…SADLSLNVSR (342 aa). Positions 343–559 are b; sequence EILQSGPVVD…QGDLGLQMRQ (217 aa). Residues 560 to 634 form a c region; sequence LLEASGQAVP…LNKLLLELSA (75 aa).

It belongs to the heat shock protein 90 family. Homodimer.

It is found in the cytoplasm. Its function is as follows. Molecular chaperone. Has ATPase activity. The chain is Chaperone protein HtpG from Xanthomonas campestris pv. campestris (strain ATCC 33913 / DSM 3586 / NCPPB 528 / LMG 568 / P 25).